A 252-amino-acid chain; its full sequence is 5'-nucleotidase SurE (252 aa).

A divalent metal cation-binding residues include Asp8, Asp9, Ser39, and Asn91.

It belongs to the SurE nucleotidase family. Requires a divalent metal cation as cofactor.

The protein localises to the cytoplasm. It carries out the reaction a ribonucleoside 5'-phosphate + H2O = a ribonucleoside + phosphate. In terms of biological role, nucleotidase that shows phosphatase activity on nucleoside 5'-monophosphates. This chain is 5'-nucleotidase SurE, found in Geobacter metallireducens (strain ATCC 53774 / DSM 7210 / GS-15).